Here is a 367-residue protein sequence, read N- to C-terminus: WD repeat-containing protein 31 (367 aa).

7 WD repeats span residues 53 to 90 (AFQEYSPAHMDTVSVVAALNSDLCVSGGKDKTVVAYNW), 94 to 132 (NVVKRFKGHEHEITKVACIPKSSQFFSASRDRMVMMWDL), 137 to 175 (QPRQQLCGHAMVVTGLAVSPDSSQLCTGSRDNTLLLWDV), 179 to 217 (QSVERASVSRNVVTHLCWVPREPYILQTSEDKTLRLWDS), 221 to 264 (QVAH…LWDL), 269 to 311 (NRIC…IWNQ), and 315 to 353 (ACLFTLSLDGSGPLTSLAVGDAISLLCASFNRGIHLLRM).

This chain is WD repeat-containing protein 31 (WDR31), found in Homo sapiens (Human).